The following is a 436-amino-acid chain: Transcription factor MYB124 (436 aa).

Residues 1 to 11 (MEDTKKKKKKN) are compositionally biased toward basic residues. The interval 1–23 (MEDTKKKKKKNINNNQDSKKKER) is disordered. The short motif at 8-15 (KKKNINNN) is the Nuclear localization signal 1 element. HTH myb-type domains are found at residues 20-71 (KKER…YTYL) and 72-126 (NSDF…KKRA). 2 consecutive DNA-binding regions (H-T-H motif) follow at residues 48 to 71 (WAII…YTYL) and 99 to 122 (WTEI…TTLC). A Nuclear localization signal 2 motif is present at residues 151-158 (PRKSENET). Residues 309–328 (SWRQPDLHDSPASSEYSSGS) form a disordered region. Positions 319–328 (PASSEYSSGS) are enriched in polar residues.

In terms of assembly, interacts with RBR1. In terms of tissue distribution, expressed in all shoot organs with higher levels in leaves, stems, flowers, siliques and floral buds. Also detected in roots tips.

The protein localises to the nucleus. Transcription factor that binds to DNA in promoters cis-regulatory element 5'-GGCGCGC-3' of cell cycle genes, including cyclins, cyclin-dependent kinases (CDKs), and components of the pre-replication complex. Binds to DNA in promoters cis-regulatory element 5'-AGCCG-3' of auxin regulated genes (e.g. PIN3 and PIN7). Together with FAMA and MYB88, ensures that stomata contain just two guard cells (GCs) by enforcing a single symmetric precursor cell division before stomatal maturity. Represses the expression of the mitosis-inducing factors CDKB1-1 and CDKA-1, specifically required for the last guard mother cells (GMC) symmetric divisions in the stomatal pathway. Represses CYCA2-3 in newly formed guard cells. Together with MYB88, regulates stomata spacing by restricting divisions late in the stomatal cell lineage thus limiting the number of GMC divisions. In collaboration with CDKB1-1 and CDKB1-2, restrict the G1/S transition and chloroplast and nuclear number during stomatal formation, and normally maintain fate and developmental progression throughout the stomatal cell lineage. Also involved in the shape regulation of pavement cells. Involved in sensing and/or transducing abiotic stress (e.g. drought and salt), probably via the positive regulation of NAC019. Regulates female reproduction being required for entry into megasporogenesis, probably via the regulation of cell cycle genes. Promotes histone H3K27me3 marks and represses stem cell gene expression. Required for lateral roots (LRs) initiation via the regulation of PIN3 expression in an auxin-dependent manner. Involved in responses to gravity stimulation in primary roots by regulating the transcription of PIN3 and PIN7 in gravity-sensing cells, thus modulating auxin asymmetric redistribution. In Arabidopsis thaliana (Mouse-ear cress), this protein is Transcription factor MYB124.